The following is a 138-amino-acid chain: uncharacterized protein (138 aa).

Residues 3–72 (LYSISKAAEK…LEDINEFVKD (70 aa)) enclose the HTH merR-type domain. A DNA-binding region (H-T-H motif) is located at residues 6–25 (ISKAAEKTSISSYTLRYYEK).

This is an uncharacterized protein from Bacillus subtilis (strain 168).